We begin with the raw amino-acid sequence, 386 residues long: AT-hook motif nuclear-localized protein 8 (386 aa).

Disordered stretches follow at residues 1–175 (MDSR…LGGT) and 303–372 (KQSS…LHPH). The span at 54–70 (QQQSQTFHQQQQQQMDQ) shows a compositional bias: low complexity. Over residues 101 to 110 (VKKKRGRPRK) the composition is skewed to basic residues. The Bipartite nuclear localization signal signature appears at 102–110 (KKKRGRPRK). Residues 102–114 (KKKRGRPRKYTPD) constitute a DNA-binding region (a.T hook 1). The segment covering 126–135 (PLLSAASNSY) has biased composition (polar residues). Over residues 136–147 (GEGGVGDSGGNG) the composition is skewed to gly residues. Positions 155–167 (KRNRGRPPGSSKK) form a DNA-binding region, a.T hook 2. Residues 174 to 316 (GTSGVGFTPH…VNIARGQNPE (143 aa)) form the PPC domain. 2 stretches are compositionally biased toward low complexity: residues 328–337 (GSVSQGPSSE) and 361–372 (QQQQQQQPLHPH).

It localises to the nucleus. Functionally, transcription factor that specifically binds AT-rich DNA sequences related to the nuclear matrix attachment regions (MARs). The protein is AT-hook motif nuclear-localized protein 8 of Arabidopsis thaliana (Mouse-ear cress).